We begin with the raw amino-acid sequence, 194 residues long: MSLVPVVVEQTNRGERSYDIYSRLLKDRIIMLSEEVNDTTASLIVAQLLFLEAEDPDKDIHLYINSPGGSITSGMAIYDTMQYIKPDVSTICVGMAASMGAFLLAAGAKGKRYALPNSEVMIHQPLGGFRGQATDIGIHAERILKMKKKLNTILSDRTGKPLEQVELDTERDHFLSAEEAKEYGLIDEVIDKKK.

Residue S98 is the Nucleophile of the active site. Residue H123 is part of the active site.

This sequence belongs to the peptidase S14 family. As to quaternary structure, fourteen ClpP subunits assemble into 2 heptameric rings which stack back to back to give a disk-like structure with a central cavity, resembling the structure of eukaryotic proteasomes.

The protein resides in the cytoplasm. The catalysed reaction is Hydrolysis of proteins to small peptides in the presence of ATP and magnesium. alpha-casein is the usual test substrate. In the absence of ATP, only oligopeptides shorter than five residues are hydrolyzed (such as succinyl-Leu-Tyr-|-NHMec, and Leu-Tyr-Leu-|-Tyr-Trp, in which cleavage of the -Tyr-|-Leu- and -Tyr-|-Trp bonds also occurs).. Functionally, cleaves peptides in various proteins in a process that requires ATP hydrolysis. Has a chymotrypsin-like activity. Plays a major role in the degradation of misfolded proteins. The polypeptide is ATP-dependent Clp protease proteolytic subunit (Clostridium botulinum (strain Hall / ATCC 3502 / NCTC 13319 / Type A)).